The sequence spans 47 residues: Single-stranded DNA-binding protein (47 aa).

As to quaternary structure, homodimer in the absence of DNA, monomer when binding DNA.

Functionally, binds preferentially to single-stranded DNA and therefore, destabilizes double-stranded DNA. It is involved in DNA replication, repair and recombination. Binds ss-DNA as the replication fork advances and stimulates the replisome processivity and accuracy. This Escherichia coli (Bacteriophage RB6) protein is Single-stranded DNA-binding protein (32).